The following is a 117-amino-acid chain: Large ribosomal subunit protein bL20c (117 aa).

The protein belongs to the bacterial ribosomal protein bL20 family.

The protein localises to the plastid. The protein resides in the chloroplast. Functionally, binds directly to 23S ribosomal RNA and is necessary for the in vitro assembly process of the 50S ribosomal subunit. It is not involved in the protein synthesizing functions of that subunit. In Olimarabidopsis pumila (Dwarf rocket), this protein is Large ribosomal subunit protein bL20c.